The sequence spans 280 residues: Nucleotide-binding protein CV_3336 (280 aa).

Residue 8–15 (GLSGSGKS) participates in ATP binding. 57-60 (DTRS) provides a ligand contact to GTP.

Belongs to the RapZ-like family.

Displays ATPase and GTPase activities. The protein is Nucleotide-binding protein CV_3336 of Chromobacterium violaceum (strain ATCC 12472 / DSM 30191 / JCM 1249 / CCUG 213 / NBRC 12614 / NCIMB 9131 / NCTC 9757 / MK).